We begin with the raw amino-acid sequence, 194 residues long: Thymidine kinase (194 aa).

ATP contacts are provided by residues 15–22 (GSMFSGKS) and 88–91 (DEVQ). E89 acts as the Proton acceptor in catalysis. Residues C145, C148, C183, and H186 each coordinate Zn(2+).

The protein belongs to the thymidine kinase family. Homotetramer.

The protein localises to the cytoplasm. The enzyme catalyses thymidine + ATP = dTMP + ADP + H(+). This Bacillus licheniformis (strain ATCC 14580 / DSM 13 / JCM 2505 / CCUG 7422 / NBRC 12200 / NCIMB 9375 / NCTC 10341 / NRRL NRS-1264 / Gibson 46) protein is Thymidine kinase.